A 440-amino-acid chain; its full sequence is Chromosome partition protein MukF (440 aa).

Residues 208-236 form a leucine-zipper region; that stretch reads LSETSGTLRELQDTLEAAGDKLQANLLRI.

The protein belongs to the MukF family. As to quaternary structure, interacts, and probably forms a ternary complex, with MukE and MukB via its C-terminal region. The complex formation is stimulated by calcium or magnesium. It is required for an interaction between MukE and MukB.

The protein localises to the cytoplasm. It localises to the nucleoid. In terms of biological role, involved in chromosome condensation, segregation and cell cycle progression. May participate in facilitating chromosome segregation by condensation DNA from both sides of a centrally located replisome during cell division. Not required for mini-F plasmid partitioning. Probably acts via its interaction with MukB and MukE. Overexpression results in anucleate cells. It has a calcium binding activity. The polypeptide is Chromosome partition protein MukF (Edwardsiella ictaluri (strain 93-146)).